The chain runs to 248 residues: Large ribosomal subunit protein uL30 (248 aa).

M1 is modified (N-acetylmethionine). 4 tandem repeats follow at residues 7–18 (KKKEVPAVPETL), 19–30 (KKKRRNFAELKI), 31–42 (KRLRKKFAQKML), and 43–54 (RKARRKLIYEKA). Residues 7–54 (KKKEVPAVPETLKKKRRNFAELKIKRLRKKFAQKMLRKARRKLIYEKA) are 4 X 12 AA tandem repeats. At T17 the chain carries Phosphothreonine. K124 is modified (N6-acetyllysine). The residue at position 127 (K127) is an N6-succinyllysine. Phosphotyrosine is present on Y139.

The protein belongs to the universal ribosomal protein uL30 family. In terms of assembly, component of the large ribosomal subunit. Homodimer. Interacts with DHX33.

It is found in the cytoplasm. Component of the large ribosomal subunit. The ribosome is a large ribonucleoprotein complex responsible for the synthesis of proteins in the cell. Binds to G-rich structures in 28S rRNA and in mRNAs. Plays a regulatory role in the translation apparatus; inhibits cell-free translation of mRNAs. The chain is Large ribosomal subunit protein uL30 (RPL7) from Homo sapiens (Human).